Reading from the N-terminus, the 74-residue chain is Histone H1.C8/H1.M1 (74 aa).

The disordered stretch occupies residues 1 to 74; it reads MSDAAVPPKK…KAVKKAPKKK (74 aa). The segment covering 11-74 has biased composition (basic residues); that stretch reads ASPKKAAAKK…KAVKKAPKKK (64 aa).

It is found in the nucleus. The protein resides in the chromosome. The chain is Histone H1.C8/H1.M1 from Trypanosoma cruzi.